A 232-amino-acid polypeptide reads, in one-letter code: Sugar fermentation stimulation protein homolog (232 aa).

It belongs to the SfsA family.

The sequence is that of Sugar fermentation stimulation protein homolog from Shouchella clausii (strain KSM-K16) (Alkalihalobacillus clausii).